Here is a 418-residue protein sequence, read N- to C-terminus: Gamma-glutamyl phosphate reductase (418 aa).

The protein belongs to the gamma-glutamyl phosphate reductase family.

Its subcellular location is the cytoplasm. It catalyses the reaction L-glutamate 5-semialdehyde + phosphate + NADP(+) = L-glutamyl 5-phosphate + NADPH + H(+). Its pathway is amino-acid biosynthesis; L-proline biosynthesis; L-glutamate 5-semialdehyde from L-glutamate: step 2/2. Its function is as follows. Catalyzes the NADPH-dependent reduction of L-glutamate 5-phosphate into L-glutamate 5-semialdehyde and phosphate. The product spontaneously undergoes cyclization to form 1-pyrroline-5-carboxylate. The polypeptide is Gamma-glutamyl phosphate reductase (Trichlorobacter lovleyi (strain ATCC BAA-1151 / DSM 17278 / SZ) (Geobacter lovleyi)).